The sequence spans 41 residues: Photosystem I reaction center subunit IX (41 aa).

A helical transmembrane segment spans residues Y7–I27.

Belongs to the PsaJ family.

The protein localises to the plastid. The protein resides in the chloroplast thylakoid membrane. Functionally, may help in the organization of the PsaE and PsaF subunits. The polypeptide is Photosystem I reaction center subunit IX (Oedogonium cardiacum (Filamentous green alga)).